A 187-amino-acid chain; its full sequence is MSIASYAQELKLALHQYPNFPSEGILFEDFLPIFRNPGLFQKLIDAFKLHLEEAFPEVKIDYIVGLESRGFLFGPTLALALGVGFVPVRKAGKLPGECFKATYEKEYGSDLFEIQKNAIPAGSNVIIVDDIIATGGSAAAAGELVEQLEANLLEYNFVMELDFLKGRSKLNAPVFTLLNAQKEALKK.

Ser68 carries the phosphoserine modification. Position 133–137 (133–137) interacts with AMP; sequence ATGGS.

Belongs to the purine/pyrimidine phosphoribosyltransferase family. As to quaternary structure, homodimer. The cofactor is Mg(2+).

The protein localises to the cytoplasm. It localises to the nucleus. The enzyme catalyses AMP + diphosphate = 5-phospho-alpha-D-ribose 1-diphosphate + adenine. The protein operates within purine metabolism; AMP biosynthesis via salvage pathway; AMP from adenine: step 1/1. Catalyzes a salvage reaction resulting in the formation of AMP, that is energically less costly than de novo synthesis. In Saccharomyces cerevisiae (strain ATCC 204508 / S288c) (Baker's yeast), this protein is Adenine phosphoribosyltransferase 1.